Reading from the N-terminus, the 192-residue chain is Xanthine phosphoribosyltransferase (192 aa).

The xanthine site is built by Leu-20 and Asn-27. A 5-phospho-alpha-D-ribose 1-diphosphate-binding site is contributed by 128–132; that stretch reads AHGEA. Residue Lys-156 participates in xanthine binding.

It belongs to the purine/pyrimidine phosphoribosyltransferase family. Xpt subfamily. Homodimer.

The protein resides in the cytoplasm. It carries out the reaction XMP + diphosphate = xanthine + 5-phospho-alpha-D-ribose 1-diphosphate. It participates in purine metabolism; XMP biosynthesis via salvage pathway; XMP from xanthine: step 1/1. In terms of biological role, converts the preformed base xanthine, a product of nucleic acid breakdown, to xanthosine 5'-monophosphate (XMP), so it can be reused for RNA or DNA synthesis. This Lactobacillus gasseri (strain ATCC 33323 / DSM 20243 / BCRC 14619 / CIP 102991 / JCM 1131 / KCTC 3163 / NCIMB 11718 / NCTC 13722 / AM63) protein is Xanthine phosphoribosyltransferase.